We begin with the raw amino-acid sequence, 178 residues long: Deoxyuridine 5'-triphosphate nucleotidohydrolase (178 aa).

This sequence belongs to the dUTPase family. Mg(2+) is required as a cofactor.

It catalyses the reaction dUTP + H2O = dUMP + diphosphate + H(+). It participates in pyrimidine metabolism; dUMP biosynthesis; dUMP from dCTP (dUTP route): step 2/2. This enzyme is involved in nucleotide metabolism: it produces dUMP, the immediate precursor of thymidine nucleotides and it decreases the intracellular concentration of dUTP so that uracil cannot be incorporated into DNA. The sequence is that of Deoxyuridine 5'-triphosphate nucleotidohydrolase from Fowl adenovirus A serotype 1 (strain CELO / Phelps) (FAdV-1).